The chain runs to 755 residues: Histone-lysine N-methyltransferase, H3 lysine-9 specific SUVH8 (755 aa).

2 disordered regions span residues 62–98 and 111–243; these read YDRD…PPQT and YDRD…KMVI. 2 stretches are compositionally biased toward basic and acidic residues: residues 73–86 and 122–135; these read VHRE…EEAH and IDRE…EDAH. Residues 174 to 186 constitute a DNA-binding region (a.T hook); that stretch reads KRGRGRPKGSKNG. Basic residues predominate over residues 174-193; the sequence is KRGRGRPKGSKNGSRKPKKP. The segment covering 197–207 has biased composition (polar residues); sequence DNNSTDASAGP. Positions 212 to 231 are enriched in basic residues; that stretch reads GKRRCGRPKGLKNRSRKPKK. The YDG domain maps to 310–448; the sequence is GPIPGVQVGD…FKEYRFKLLR (139 aa). Positions 528 to 578 constitute a Pre-SET domain; sequence QSLVQSYIHQNCTCILKNCGQLPYHDNILVCRKPLIYECGGSCPTRMVETG. Positions 581 to 723 constitute an SET domain; it reads LHLEVFKTSN…PMTELTYDYG (143 aa). Residues 591 to 593, D624, Y626, R676, and 679 to 680 each bind S-adenosyl-L-methionine; these read CGW and NH. 4 residues coordinate Zn(2+): C682, C743, C745, and C750. The Post-SET domain maps to 739-755; sequence GKKICLCGSVKCRGSFG.

The protein belongs to the class V-like SAM-binding methyltransferase superfamily. Histone-lysine methyltransferase family. Suvar3-9 subfamily.

Its subcellular location is the nucleus. The protein localises to the chromosome. It localises to the centromere. It carries out the reaction N(6)-methyl-L-lysyl(9)-[histone H3] + S-adenosyl-L-methionine = N(6),N(6)-dimethyl-L-lysyl(9)-[histone H3] + S-adenosyl-L-homocysteine + H(+). The enzyme catalyses L-lysyl(9)-[histone H3] + S-adenosyl-L-methionine = N(6)-methyl-L-lysyl(9)-[histone H3] + S-adenosyl-L-homocysteine + H(+). Functionally, histone methyltransferase. Methylates 'Lys-9' of histone H3. H3 'Lys-9' methylation represents a specific tag for epigenetic transcriptional repression. The chain is Histone-lysine N-methyltransferase, H3 lysine-9 specific SUVH8 (SUVH8) from Arabidopsis thaliana (Mouse-ear cress).